The following is a 346-amino-acid chain: Uroporphyrinogen decarboxylase (346 aa).

Residues R23–R27, D73, Y151, S206, and H321 contribute to the substrate site.

The protein belongs to the uroporphyrinogen decarboxylase family. In terms of assembly, homodimer.

The protein localises to the cytoplasm. It catalyses the reaction uroporphyrinogen III + 4 H(+) = coproporphyrinogen III + 4 CO2. Its pathway is porphyrin-containing compound metabolism; protoporphyrin-IX biosynthesis; coproporphyrinogen-III from 5-aminolevulinate: step 4/4. Catalyzes the decarboxylation of four acetate groups of uroporphyrinogen-III to yield coproporphyrinogen-III. The polypeptide is Uroporphyrinogen decarboxylase (Sulfurovum sp. (strain NBC37-1)).